The following is a 495-amino-acid chain: Cobyric acid synthase (495 aa).

Residues 256-444 (KVNVAVVLLR…VHGILDNPSV (189 aa)) enclose the GATase cobBQ-type domain. Cys337 functions as the Nucleophile in the catalytic mechanism. His436 is a catalytic residue.

Belongs to the CobB/CobQ family. CobQ subfamily.

The protein operates within cofactor biosynthesis; adenosylcobalamin biosynthesis. Functionally, catalyzes amidations at positions B, D, E, and G on adenosylcobyrinic A,C-diamide. NH(2) groups are provided by glutamine, and one molecule of ATP is hydrogenolyzed for each amidation. The protein is Cobyric acid synthase of Bacteroides fragilis (strain ATCC 25285 / DSM 2151 / CCUG 4856 / JCM 11019 / LMG 10263 / NCTC 9343 / Onslow / VPI 2553 / EN-2).